A 246-amino-acid polypeptide reads, in one-letter code: Trypsin V-B (246 aa).

Positions 1-15 (MKICIFFTLLGTVAA) are cleaved as a signal peptide. Positions 16–24 (FPTEDNDDR) are cleaved as a propeptide — activation peptide. Residues 25-244 (IVGGYTCQEH…YLNWIQQTVA (220 aa)) enclose the Peptidase S1 domain. 6 disulfide bridges follow: Cys31/Cys160, Cys49/Cys65, Cys133/Cys233, Cys140/Cys206, Cys171/Cys185, and Cys196/Cys220. Catalysis depends on His64, which acts as the Charge relay system. Positions 76, 78, and 86 each coordinate Ca(2+). Residue Asp108 is the Charge relay system of the active site. The Charge relay system role is filled by Ser200.

The protein belongs to the peptidase S1 family. Requires Ca(2+) as cofactor.

The protein resides in the secreted. It is found in the extracellular space. It carries out the reaction Preferential cleavage: Arg-|-Xaa, Lys-|-Xaa.. This chain is Trypsin V-B, found in Rattus norvegicus (Rat).